A 34-amino-acid polypeptide reads, in one-letter code: Photosystem II reaction center protein Psb30 (34 aa).

A helical membrane pass occupies residues 6 to 26 (VIAQLVSLGVIVLVGPAVIIL).

Belongs to the Psb30/Ycf12 family. In terms of assembly, PSII is composed of 1 copy each of membrane proteins PsbA, PsbB, PsbC, PsbD, PsbE, PsbF, PsbH, PsbI, PsbJ, PsbK, PsbL, PsbM, PsbT, PsbX, PsbY, PsbZ, Psb30/Ycf12, peripheral proteins of the oxygen-evolving complex and a large number of cofactors. It forms dimeric complexes.

The protein resides in the plastid. The protein localises to the chloroplast thylakoid membrane. A core subunit of photosystem II (PSII), probably helps stabilize the reaction center. The sequence is that of Photosystem II reaction center protein Psb30 from Pyropia yezoensis (Susabi-nori).